The chain runs to 653 residues: Dual specificity protein kinase shkB (653 aa).

The interval 112–133 (NPNNNNNNSNNTNSSDSNQNYS) is disordered. Residues 174–432 (YNREAKLGSG…FAEISKQRIL (259 aa)) form the Protein kinase domain. ATP-binding positions include 180-188 (LGSGAFGSV) and lysine 201. The Proton acceptor role is filled by aspartate 298. The SH2 domain occupies 534–625 (GFMAATSSKN…IKEPFEGGPF (92 aa)).

It belongs to the protein kinase superfamily. TKL Ser/Thr protein kinase family. SH2 domain-containing protein kinase subfamily.

Its subcellular location is the membrane. The enzyme catalyses L-seryl-[protein] + ATP = O-phospho-L-seryl-[protein] + ADP + H(+). It carries out the reaction L-threonyl-[protein] + ATP = O-phospho-L-threonyl-[protein] + ADP + H(+). Required for proper chemotaxis and phagocytosis; proper spatiotemporal control of F-actin levels in chemotaxing cells. Negative regulator of the PI3K (phosphatidylinositol 3 kinase) pathway. Predominantly phosphorylates serines and threonines and tyrosines at a lower level. This Dictyostelium discoideum (Social amoeba) protein is Dual specificity protein kinase shkB (shkB).